The sequence spans 457 residues: ATP synthase subunit beta (457 aa).

Residue 147–154 (GGAGVGKT) coordinates ATP.

This sequence belongs to the ATPase alpha/beta chains family. F-type ATPases have 2 components, CF(1) - the catalytic core - and CF(0) - the membrane proton channel. CF(1) has five subunits: alpha(3), beta(3), gamma(1), delta(1), epsilon(1). CF(0) has three main subunits: a(1), b(2) and c(9-12). The alpha and beta chains form an alternating ring which encloses part of the gamma chain. CF(1) is attached to CF(0) by a central stalk formed by the gamma and epsilon chains, while a peripheral stalk is formed by the delta and b chains.

It is found in the cell inner membrane. The enzyme catalyses ATP + H2O + 4 H(+)(in) = ADP + phosphate + 5 H(+)(out). Its function is as follows. Produces ATP from ADP in the presence of a proton gradient across the membrane. The catalytic sites are hosted primarily by the beta subunits. This chain is ATP synthase subunit beta, found in Actinobacillus pleuropneumoniae serotype 5b (strain L20).